We begin with the raw amino-acid sequence, 425 residues long: Threonylcarbamoyladenosine tRNA methylthiotransferase (425 aa).

Residues 60–295 (RKNELIEVLS…RSYTRYTDER (236 aa)) form the Radical SAM core domain. [4Fe-4S] cluster contacts are provided by Cys-74, Cys-78, and Cys-81. The TRAM domain occupies 293-355 (DERIGELHRV…KFSMISKPAS (63 aa)). Residues 362 to 382 (PLSLMHLFPLAVFCLVLITLY) form a helical membrane-spanning segment.

This sequence belongs to the methylthiotransferase family. CDKAL1 subfamily. It depends on [4Fe-4S] cluster as a cofactor.

The protein resides in the membrane. It carries out the reaction N(6)-L-threonylcarbamoyladenosine(37) in tRNA + (sulfur carrier)-SH + AH2 + 2 S-adenosyl-L-methionine = 2-methylsulfanyl-N(6)-L-threonylcarbamoyladenosine(37) in tRNA + (sulfur carrier)-H + 5'-deoxyadenosine + L-methionine + A + S-adenosyl-L-homocysteine + 2 H(+). Functionally, catalyzes the methylthiolation of N6-threonylcarbamoyladenosine (t(6)A), leading to the formation of 2-methylthio-N6-threonylcarbamoyladenosine (ms(2)t(6)A) at position 37 in tRNAs that read codons beginning with adenine. The sequence is that of Threonylcarbamoyladenosine tRNA methylthiotransferase from Caenorhabditis elegans.